Reading from the N-terminus, the 37-residue chain is Large ribosomal subunit protein bL36 (37 aa).

Belongs to the bacterial ribosomal protein bL36 family.

This chain is Large ribosomal subunit protein bL36, found in Borreliella burgdorferi (strain ATCC 35210 / DSM 4680 / CIP 102532 / B31) (Borrelia burgdorferi).